Here is a 441-residue protein sequence, read N- to C-terminus: Double-stranded RNA-binding protein 1 (441 aa).

3 DRBM domains span residues 1–71, 86–155, and 169–237; these read MYKS…HLSS, SYKS…SLPQ, and SYKN…HFED. Residues 69–88 are disordered; sequence LSSLPLPPPPPPSENQSSYK.

In terms of biological role, binds double-stranded RNA. The polypeptide is Double-stranded RNA-binding protein 1 (DRB1) (Oryza sativa subsp. japonica (Rice)).